Reading from the N-terminus, the 420-residue chain is Glutamyl-tRNA reductase (420 aa).

Substrate-binding positions include threonine 49 to arginine 52, serine 109, glutamate 114 to glutamine 116, and glutamine 120. Catalysis depends on cysteine 50, which acts as the Nucleophile. Glycine 189–isoleucine 194 contacts NADP(+).

This sequence belongs to the glutamyl-tRNA reductase family. In terms of assembly, homodimer.

It catalyses the reaction (S)-4-amino-5-oxopentanoate + tRNA(Glu) + NADP(+) = L-glutamyl-tRNA(Glu) + NADPH + H(+). The protein operates within porphyrin-containing compound metabolism; protoporphyrin-IX biosynthesis; 5-aminolevulinate from L-glutamyl-tRNA(Glu): step 1/2. In terms of biological role, catalyzes the NADPH-dependent reduction of glutamyl-tRNA(Glu) to glutamate 1-semialdehyde (GSA). This is Glutamyl-tRNA reductase from Yersinia pseudotuberculosis serotype O:1b (strain IP 31758).